The following is a 795-amino-acid chain: Antibiotic resistant DNA gyrase subunit B (795 aa).

In terms of domain architecture, Toprim spans 421–536; sequence SELYLVEGNS…RGYIYIAQPP (116 aa). Residues glutamate 427, aspartate 501, and aspartate 503 each contribute to the Mg(2+) site.

It belongs to the type II topoisomerase GyrB family. In terms of assembly, heterotetramer, composed of two GyrA and two GyrB chains. In the heterotetramer, GyrA contains the active site tyrosine that forms a transient covalent intermediate with DNA, while GyrB binds cofactors and catalyzes ATP hydrolysis. Mg(2+) is required as a cofactor. The cofactor is Mn(2+). It depends on Ca(2+) as a cofactor.

It is found in the cytoplasm. The enzyme catalyses ATP-dependent breakage, passage and rejoining of double-stranded DNA.. In terms of biological role, a type II topoisomerase that negatively supercoils closed circular double-stranded (ds) DNA in an ATP-dependent manner to modulate DNA topology and maintain chromosomes in an underwound state. Negative supercoiling favors strand separation, and DNA replication, transcription, recombination and repair, all of which involve strand separation. Also able to catalyze the interconversion of other topological isomers of dsDNA rings, including catenanes and knotted rings. Type II topoisomerases break and join 2 DNA strands simultaneously in an ATP-dependent manner. This chain is Antibiotic resistant DNA gyrase subunit B, found in Neisseria gonorrhoeae.